Consider the following 222-residue polypeptide: Phosphoribosylformylglycinamidine synthase subunit PurQ (222 aa).

In terms of domain architecture, Glutamine amidotransferase type-1 spans 3 to 222 (AAVLVFPGSN…ASLAAALVAA (220 aa)). The active-site Nucleophile is Cys86. Catalysis depends on residues His194 and Glu196.

As to quaternary structure, part of the FGAM synthase complex composed of 1 PurL, 1 PurQ and 2 PurS subunits.

It localises to the cytoplasm. It catalyses the reaction N(2)-formyl-N(1)-(5-phospho-beta-D-ribosyl)glycinamide + L-glutamine + ATP + H2O = 2-formamido-N(1)-(5-O-phospho-beta-D-ribosyl)acetamidine + L-glutamate + ADP + phosphate + H(+). The catalysed reaction is L-glutamine + H2O = L-glutamate + NH4(+). It participates in purine metabolism; IMP biosynthesis via de novo pathway; 5-amino-1-(5-phospho-D-ribosyl)imidazole from N(2)-formyl-N(1)-(5-phospho-D-ribosyl)glycinamide: step 1/2. Functionally, part of the phosphoribosylformylglycinamidine synthase complex involved in the purines biosynthetic pathway. Catalyzes the ATP-dependent conversion of formylglycinamide ribonucleotide (FGAR) and glutamine to yield formylglycinamidine ribonucleotide (FGAM) and glutamate. The FGAM synthase complex is composed of three subunits. PurQ produces an ammonia molecule by converting glutamine to glutamate. PurL transfers the ammonia molecule to FGAR to form FGAM in an ATP-dependent manner. PurS interacts with PurQ and PurL and is thought to assist in the transfer of the ammonia molecule from PurQ to PurL. This Jannaschia sp. (strain CCS1) protein is Phosphoribosylformylglycinamidine synthase subunit PurQ.